The primary structure comprises 302 residues: Homoserine O-acetyltransferase (302 aa).

Catalysis depends on C142, which acts as the Acyl-thioester intermediate. Residues K163 and S192 each coordinate substrate. H235 (proton acceptor) is an active-site residue. E237 is a catalytic residue. R249 serves as a coordination point for substrate.

This sequence belongs to the MetA family.

The protein resides in the cytoplasm. It catalyses the reaction L-homoserine + acetyl-CoA = O-acetyl-L-homoserine + CoA. It participates in amino-acid biosynthesis; L-methionine biosynthesis via de novo pathway; O-acetyl-L-homoserine from L-homoserine: step 1/1. Transfers an acetyl group from acetyl-CoA to L-homoserine, forming acetyl-L-homoserine. The chain is Homoserine O-acetyltransferase from Geobacillus sp. (strain WCH70).